Reading from the N-terminus, the 471-residue chain is Heat shock 70 kDa protein 13 (471 aa).

Positions 1-22 (MAGEMTILGSAVLTLLLAGYLA) are cleaved as a signal peptide. Residues 315–337 (ENDRKGPPTSDSELPKDKFSQAN) are disordered.

This sequence belongs to the heat shock protein 70 family. Binds UBQLN2.

It localises to the microsome. It is found in the endoplasmic reticulum. Functionally, has peptide-independent ATPase activity. The chain is Heat shock 70 kDa protein 13 (HSPA13) from Bos taurus (Bovine).